The primary structure comprises 212 residues: Probable nicotinate-nucleotide adenylyltransferase (212 aa).

Belongs to the NadD family.

The catalysed reaction is nicotinate beta-D-ribonucleotide + ATP + H(+) = deamido-NAD(+) + diphosphate. It functions in the pathway cofactor biosynthesis; NAD(+) biosynthesis; deamido-NAD(+) from nicotinate D-ribonucleotide: step 1/1. Catalyzes the reversible adenylation of nicotinate mononucleotide (NaMN) to nicotinic acid adenine dinucleotide (NaAD). The sequence is that of Probable nicotinate-nucleotide adenylyltransferase from Mycobacterium avium (strain 104).